A 148-amino-acid polypeptide reads, in one-letter code: MFDIGFWELVVIGIVALVVLGPERLPVAIRTASHWIRLIRSTANSVKSELEQELRLQELHNDLKKAEQLQMSNLSPELQESIEQLKAAAQSVTRPYEQQNTIHPAPAAAEVKAEPAQPAAAMTHDEAPMVTTVQSTDVLADKKEEVKP.

Residues 1 to 21 (MFDIGFWELVVIGIVALVVLG) form a helical membrane-spanning segment.

The protein belongs to the TatB family. As to quaternary structure, the Tat system comprises two distinct complexes: a TatABC complex, containing multiple copies of TatA, TatB and TatC subunits, and a separate TatA complex, containing only TatA subunits. Substrates initially bind to the TatABC complex, which probably triggers association of the separate TatA complex to form the active translocon.

It localises to the cell inner membrane. Functionally, part of the twin-arginine translocation (Tat) system that transports large folded proteins containing a characteristic twin-arginine motif in their signal peptide across membranes. Together with TatC, TatB is part of a receptor directly interacting with Tat signal peptides. TatB may form an oligomeric binding site that transiently accommodates folded Tat precursor proteins before their translocation. The protein is Sec-independent protein translocase protein TatB of Aeromonas salmonicida (strain A449).